We begin with the raw amino-acid sequence, 153 residues long: 3-hydroxyacyl-[acyl-carrier-protein] dehydratase FabZ (153 aa).

The active site involves H54.

Belongs to the thioester dehydratase family. FabZ subfamily.

The protein resides in the cytoplasm. It catalyses the reaction a (3R)-hydroxyacyl-[ACP] = a (2E)-enoyl-[ACP] + H2O. In terms of biological role, involved in unsaturated fatty acids biosynthesis. Catalyzes the dehydration of short chain beta-hydroxyacyl-ACPs and long chain saturated and unsaturated beta-hydroxyacyl-ACPs. This chain is 3-hydroxyacyl-[acyl-carrier-protein] dehydratase FabZ, found in Shewanella pealeana (strain ATCC 700345 / ANG-SQ1).